The following is a 465-amino-acid chain: Kynureninase (465 aa).

Pyridoxal 5'-phosphate contacts are provided by residues Leu133, Thr134, 161-164, Ser217, Asp246, His249, and Tyr271; that span reads FPSD. Lys272 is modified (N6-(pyridoxal phosphate)lysine). Residues Trp302 and Asn330 each contribute to the pyridoxal 5'-phosphate site.

It belongs to the kynureninase family. Homodimer. Pyridoxal 5'-phosphate serves as cofactor.

The protein localises to the cytoplasm. It carries out the reaction L-kynurenine + H2O = anthranilate + L-alanine + H(+). The enzyme catalyses 3-hydroxy-L-kynurenine + H2O = 3-hydroxyanthranilate + L-alanine + H(+). It functions in the pathway amino-acid degradation; L-kynurenine degradation; L-alanine and anthranilate from L-kynurenine: step 1/1. It participates in cofactor biosynthesis; NAD(+) biosynthesis; quinolinate from L-kynurenine: step 2/3. In terms of biological role, catalyzes the cleavage of L-kynurenine (L-Kyn) and L-3-hydroxykynurenine (L-3OHKyn) into anthranilic acid (AA) and 3-hydroxyanthranilic acid (3-OHAA), respectively. The sequence is that of Kynureninase from Nematostella vectensis (Starlet sea anemone).